Here is a 64-residue protein sequence, read N- to C-terminus: Large ribosomal subunit protein uL29 (64 aa).

It belongs to the universal ribosomal protein uL29 family.

In Solidesulfovibrio magneticus (strain ATCC 700980 / DSM 13731 / RS-1) (Desulfovibrio magneticus), this protein is Large ribosomal subunit protein uL29.